A 335-amino-acid polypeptide reads, in one-letter code: Hsp90 co-chaperone Cdc37-like 1 (335 aa).

A compositionally biased stretch (pro residues) spans 1–11 (MEQPWPPPGPW). The disordered stretch occupies residues 1–42 (MEQPWPPPGPWSFPRTGGETEEESDLDVSPSSSHYSPVPDGG). Residues 2-170 (EQPWPPPGPW…YEQKIRHFGM (169 aa)) are self-association. Positions 27-40 (DVSPSSSHYSPVPD) are enriched in low complexity. Serine 32 and serine 88 each carry phosphoserine. Positions 84 to 120 (HNSESLDQEHAKAQTAVSELRQREEEWRQKEEALVQR) form a coiled coil. A self-association and interaction with Hsp90 region spans residues 147–276 (KTEEEDKSQS…SRVRLYAQSQ (130 aa)). An interaction with Hsp70 region spans residues 266–335 (KSRVRLYAQS…EDDDRMMDTV (70 aa)). The segment at 277–335 (SLQPVTVQNHVPHSGVGCIGSLESLPQNPDSLQCCTPAPLCSVDSVVHKEDDDRMMDTV) is required for interaction with STIP1.

It belongs to the CDC37 family. Self-associates. Forms complexes with Hsp70 and Hsp90. Interacts with CDC37, FKBP4, PPID and STIP1.

It localises to the cytoplasm. Functionally, co-chaperone that binds to numerous proteins and promotes their interaction with Hsp70 and Hsp90. The chain is Hsp90 co-chaperone Cdc37-like 1 (Cdc37l1) from Mus musculus (Mouse).